A 181-amino-acid chain; its full sequence is MRFKAELMNAPEMRRALYRIAHEIVEANKGTEGLALVGIHTRGIPLAHRIARFIAEFEGKEVPVGVLDITLYRDDLTEIGYRPQVRETRIPFDLTGKAIVLVDDVLYTGRTARAALDALIDLGRPRRIYLAVLVDRGHRELPIRADFVGKNVPTSRSEVVKVKVEEVDGEDRVELWEREGA.

Residues 41–42 (TR), R82, R86, 103–111 (DDVLYTGRT), R136, and V160 each bind substrate. The PRPP-binding motif lies at 99 to 111 (IVLVDDVLYTGRT).

Belongs to the purine/pyrimidine phosphoribosyltransferase family. PyrR subfamily.

It carries out the reaction UMP + diphosphate = 5-phospho-alpha-D-ribose 1-diphosphate + uracil. In terms of biological role, probably regulates transcriptional attenuation of the pyrimidine nucleotide (pyr) operon in response to exogenous pyrimidines. In contrast to pyr attenuation in Bacillus, PyrR from Thermus could act as a translational repressor: the binding of PyrR at its proposed recognition site in the transcript would prevent initiation of translation of the leader peptide, resulting in terminator formation and reduced expression of downstream genes. Also displays uracil phosphoribosyltransferase activity. The polypeptide is Bifunctional protein PyrR (pyrR) (Thermus thermophilus (strain ATCC BAA-163 / DSM 7039 / HB27)).